The chain runs to 65 residues: Hainantoxin-X-3 (65 aa).

A signal peptide spans 1-20 (MNMKILVLVAVLCLVVSTHA). The propeptide occupies 21-37 (ERHSKTDMEDSPMIQER). Intrachain disulfides connect C46–C59 and C55–C64.

It belongs to the neurotoxin 36 family. 02 subfamily. Expressed by the venom gland.

It localises to the secreted. Functionally, reversibly blocks N-type calcium channels (Cav2.2/CACNA1B) in rat dorsal root ganglion cells. Elicits no toxic symptoms in either vertebrates or invertebrates during a period of 48 hours post-injection, when it was assayed in vivo by direct injection into mice and cockroaches. This is Hainantoxin-X-3 from Cyriopagopus hainanus (Chinese bird spider).